A 72-amino-acid chain; its full sequence is Translation initiation factor IF-1 (72 aa).

One can recognise an S1-like domain in the interval 1 to 72; the sequence is MSKQSSIEQD…TKGRIVFRYK (72 aa).

This sequence belongs to the IF-1 family. As to quaternary structure, component of the 30S ribosomal translation pre-initiation complex which assembles on the 30S ribosome in the order IF-2 and IF-3, IF-1 and N-formylmethionyl-tRNA(fMet); mRNA recruitment can occur at any time during PIC assembly.

The protein localises to the cytoplasm. In terms of biological role, one of the essential components for the initiation of protein synthesis. Stabilizes the binding of IF-2 and IF-3 on the 30S subunit to which N-formylmethionyl-tRNA(fMet) subsequently binds. Helps modulate mRNA selection, yielding the 30S pre-initiation complex (PIC). Upon addition of the 50S ribosomal subunit IF-1, IF-2 and IF-3 are released leaving the mature 70S translation initiation complex. This is Translation initiation factor IF-1 from Cytophaga hutchinsonii (strain ATCC 33406 / DSM 1761 / CIP 103989 / NBRC 15051 / NCIMB 9469 / D465).